We begin with the raw amino-acid sequence, 547 residues long: Glucose-6-phosphate isomerase (547 aa).

The active-site Proton donor is the E353. Catalysis depends on residues H384 and K512.

The protein belongs to the GPI family.

It localises to the cytoplasm. The catalysed reaction is alpha-D-glucose 6-phosphate = beta-D-fructose 6-phosphate. Its pathway is carbohydrate biosynthesis; gluconeogenesis. It functions in the pathway carbohydrate degradation; glycolysis; D-glyceraldehyde 3-phosphate and glycerone phosphate from D-glucose: step 2/4. Functionally, catalyzes the reversible isomerization of glucose-6-phosphate to fructose-6-phosphate. The protein is Glucose-6-phosphate isomerase of Campylobacter jejuni subsp. doylei (strain ATCC BAA-1458 / RM4099 / 269.97).